Reading from the N-terminus, the 138-residue chain is MRFFLAITALVAAVTAAPSADVAAVNQMAAMTLAEADASCGNGASLYCCDKSKQGGDTGSPGQAGGVGLLGAIVGVNGLLQGLLGQCSKININAIGAAGVLNQECTARAACCQNTPSVAHHGLVNIALPCIPINSLVG.

Positions 1–16 (MRFFLAITALVAAVTA) are cleaved as a signal peptide. Disulfide bonds link C40–C111, C48–C105, C49–C87, and C112–C130.

The protein belongs to the fungal hydrophobin family. Self-assembles to form functional amyloid fibrils called rodlets. Self-assembly into fibrillar rodlets occurs spontaneously at hydrophobic:hydrophilic interfaces and the rodlets further associate laterally to form amphipathic monolayers.

The protein resides in the secreted. Its subcellular location is the cell wall. In terms of biological role, aerial growth, conidiation, and dispersal of filamentous fungi in the environment rely upon a capability of their secreting small amphipathic proteins called hydrophobins (HPBs) with low sequence identity. Class I can self-assemble into an outermost layer of rodlet bundles on aerial cell surfaces, conferring cellular hydrophobicity that supports fungal growth, development and dispersal; whereas Class II form highly ordered films at water-air interfaces through intermolecular interactions but contribute nothing to the rodlet structure. HYD3 is a class I hydrophobin that contributes to the formation of aerial hyphae and fruiting bodies. The polypeptide is Class I hydrophobin 3 (Cordyceps militaris (Caterpillar fungus)).